Reading from the N-terminus, the 494-residue chain is UDP-glucose 6-dehydrogenase (494 aa).

NAD(+) is bound by residues glycine 11–glycine 16, aspartate 36, arginine 41, and valine 89–threonine 93. The segment at serine 88 to glutamate 110 is disordered. An N6-acetyllysine modification is found at lysine 107. Positions lysine 129–arginine 135 are allosteric switch region. Residue serine 130 to valine 132 participates in NAD(+) binding. Residue glutamate 161 is the Proton donor/acceptor of the active site. Residues glutamate 161–glutamate 165, lysine 220–asparagine 224, arginine 260, and lysine 267–glycine 273 contribute to the substrate site. Glutamate 165 serves as a coordination point for NAD(+). Lysine 220 serves as the catalytic Proton donor/acceptor. The active-site Nucleophile is the cysteine 276. Residue cysteine 276–lysine 279 coordinates NAD(+). The tract at residues serine 321–threonine 325 is important for formation of active hexamer structure. Phenylalanine 338 to lysine 339 contacts substrate. Arginine 346 lines the NAD(+) pocket. Position 442 (arginine 442) interacts with substrate. Residues valine 466–valine 494 are disordered. Phosphoserine is present on serine 476.

It belongs to the UDP-glucose/GDP-mannose dehydrogenase family. As to quaternary structure, homohexamer.

It catalyses the reaction UDP-alpha-D-glucose + 2 NAD(+) + H2O = UDP-alpha-D-glucuronate + 2 NADH + 3 H(+). It functions in the pathway nucleotide-sugar biosynthesis; UDP-alpha-D-glucuronate biosynthesis; UDP-alpha-D-glucuronate from UDP-alpha-D-glucose: step 1/1. With respect to regulation, UDP-alpha-D-xylose (UDX) acts as a feedback inhibitor. It binds at the same site as the substrate, but functions as allosteric inhibitor by triggering a conformation change that disrupts the active hexameric ring structure and gives rise to an inactive, horseshoe-shaped hexamer. Functionally, catalyzes the formation of UDP-alpha-D-glucuronate, a constituent of complex glycosaminoglycans. Required for the biosynthesis of chondroitin sulfate and heparan sulfate. Required for embryonic development via its role in the biosynthesis of glycosaminoglycans. Required for proper brain and neuronal development. This is UDP-glucose 6-dehydrogenase (UGDH) from Pongo abelii (Sumatran orangutan).